The primary structure comprises 201 residues: Large ribosomal subunit protein bL25 (201 aa).

Belongs to the bacterial ribosomal protein bL25 family. CTC subfamily. Part of the 50S ribosomal subunit; part of the 5S rRNA/L5/L18/L25 subcomplex. Contacts the 5S rRNA. Binds to the 5S rRNA independently of L5 and L18.

Functionally, this is one of the proteins that binds to the 5S RNA in the ribosome where it forms part of the central protuberance. This is Large ribosomal subunit protein bL25 from Burkholderia lata (strain ATCC 17760 / DSM 23089 / LMG 22485 / NCIMB 9086 / R18194 / 383).